The chain runs to 292 residues: Cytidine deaminase (292 aa).

2 consecutive CMP/dCMP-type deaminase domains span residues 47–167 (TTLK…FGPK) and 186–292 (DHQD…YYSL). 88–90 (NQE) provides a ligand contact to substrate. Residue histidine 101 coordinates Zn(2+). The active-site Proton donor is the glutamate 103. Zn(2+) contacts are provided by cysteine 128 and cysteine 131.

It belongs to the cytidine and deoxycytidylate deaminase family. Homodimer. Zn(2+) is required as a cofactor.

The enzyme catalyses cytidine + H2O + H(+) = uridine + NH4(+). It catalyses the reaction 2'-deoxycytidine + H2O + H(+) = 2'-deoxyuridine + NH4(+). Functionally, this enzyme scavenges exogenous and endogenous cytidine and 2'-deoxycytidine for UMP synthesis. This Haemophilus influenzae (strain ATCC 51907 / DSM 11121 / KW20 / Rd) protein is Cytidine deaminase.